Consider the following 211-residue polypeptide: Transcriptional regulator GfcR (211 aa).

This sequence belongs to the purine/pyrimidine phosphoribosyltransferase family. GfcR subfamily.

DNA-binding transcriptional regulator that functions as a regulator of central sugar catabolic pathways. The protein is Transcriptional regulator GfcR of Halorubrum lacusprofundi (strain ATCC 49239 / DSM 5036 / JCM 8891 / ACAM 34).